The primary structure comprises 239 residues: MQERKRVLVKFSGEALAGENGFGIENSILKFIASEIKELIKNQIEVGIVIGGGNIIRGVSAAKGGLIKRTSGDHMGMLATVINAIAIQEALESSGLEVRVQSAIQMEAFCETYIMRRAQRHLEKGRVVVFAAGTGNPYFTTDTTAILRAVEIDADMVIKATKVNGVYDKDPKQFDDAVFLNTLSYDEAMQDNIKVMDDTAIALAKDNKLPIVVCNMFEEGNLLKIIQGDTSLCSTVKNN.

Position 10-13 (10-13 (KFSG)) interacts with ATP. Positions 18–23 (GENGFG) are involved in allosteric activation by GTP. Position 52 (Gly-52) interacts with UMP. Residues Gly-53 and Arg-57 each coordinate ATP. UMP contacts are provided by residues Asp-73 and 134–141 (TGNPYFTT). ATP-binding residues include Thr-161, Tyr-167, and Asp-170.

It belongs to the UMP kinase family. As to quaternary structure, homohexamer.

The protein resides in the cytoplasm. It carries out the reaction UMP + ATP = UDP + ADP. The protein operates within pyrimidine metabolism; CTP biosynthesis via de novo pathway; UDP from UMP (UMPK route): step 1/1. Allosterically activated by GTP. Inhibited by UTP. Catalyzes the reversible phosphorylation of UMP to UDP. The polypeptide is Uridylate kinase (Campylobacter jejuni subsp. jejuni serotype O:2 (strain ATCC 700819 / NCTC 11168)).